We begin with the raw amino-acid sequence, 147 residues long: Putative pre-16S rRNA nuclease (147 aa).

It belongs to the YqgF nuclease family.

It is found in the cytoplasm. Functionally, could be a nuclease involved in processing of the 5'-end of pre-16S rRNA. This Latilactobacillus sakei subsp. sakei (strain 23K) (Lactobacillus sakei subsp. sakei) protein is Putative pre-16S rRNA nuclease.